Reading from the N-terminus, the 126-residue chain is Aspartate 1-decarboxylase (126 aa).

The active-site Schiff-base intermediate with substrate; via pyruvic acid is the Ser25. A Pyruvic acid (Ser) modification is found at Ser25. Thr57 provides a ligand contact to substrate. Residue Tyr58 is the Proton donor of the active site. Residue 73–75 participates in substrate binding; it reads GAA.

It belongs to the PanD family. As to quaternary structure, heterooctamer of four alpha and four beta subunits. Requires pyruvate as cofactor. Post-translationally, is synthesized initially as an inactive proenzyme, which is activated by self-cleavage at a specific serine bond to produce a beta-subunit with a hydroxyl group at its C-terminus and an alpha-subunit with a pyruvoyl group at its N-terminus.

The protein localises to the cytoplasm. It carries out the reaction L-aspartate + H(+) = beta-alanine + CO2. Its pathway is cofactor biosynthesis; (R)-pantothenate biosynthesis; beta-alanine from L-aspartate: step 1/1. Functionally, catalyzes the pyruvoyl-dependent decarboxylation of aspartate to produce beta-alanine. In Acetivibrio thermocellus (strain ATCC 27405 / DSM 1237 / JCM 9322 / NBRC 103400 / NCIMB 10682 / NRRL B-4536 / VPI 7372) (Clostridium thermocellum), this protein is Aspartate 1-decarboxylase.